The following is a 67-amino-acid chain: Sporulation protein 24 (67 aa).

A phosphoserine mark is found at Ser24 and Ser32.

Post-translationally, phosphorylated during meiosis. During meiosis, exists in both unphosphorylated and phosphorylated forms with the highest degree of phosphorylation occurring in mid-meiosis.

Its subcellular location is the prospore membrane. In terms of biological role, required for efficient sporulation. This chain is Sporulation protein 24, found in Saccharomyces cerevisiae (strain ATCC 204508 / S288c) (Baker's yeast).